A 582-amino-acid chain; its full sequence is Formate--tetrahydrofolate ligase (582 aa).

65 to 72 (TPLGEGKT) lines the ATP pocket.

Belongs to the formate--tetrahydrofolate ligase family.

The enzyme catalyses (6S)-5,6,7,8-tetrahydrofolate + formate + ATP = (6R)-10-formyltetrahydrofolate + ADP + phosphate. Its pathway is one-carbon metabolism; tetrahydrofolate interconversion. The protein is Formate--tetrahydrofolate ligase of Vibrio parahaemolyticus serotype O3:K6 (strain RIMD 2210633).